Reading from the N-terminus, the 291-residue chain is ATP synthase gamma chain (291 aa).

The protein belongs to the ATPase gamma chain family. As to quaternary structure, F-type ATPases have 2 components, CF(1) - the catalytic core - and CF(0) - the membrane proton channel. CF(1) has five subunits: alpha(3), beta(3), gamma(1), delta(1), epsilon(1). CF(0) has three main subunits: a, b and c.

Its subcellular location is the cell inner membrane. In terms of biological role, produces ATP from ADP in the presence of a proton gradient across the membrane. The gamma chain is believed to be important in regulating ATPase activity and the flow of protons through the CF(0) complex. This chain is ATP synthase gamma chain, found in Methylobacillus flagellatus (strain ATCC 51484 / DSM 6875 / VKM B-1610 / KT).